A 190-amino-acid polypeptide reads, in one-letter code: RRP15-like protein (190 aa).

A compositionally biased stretch (basic and acidic residues) spans 1-11 (MSTKNRDRLVV). Disordered stretches follow at residues 1–69 (MSTK…TRKE) and 119–190 (QKTM…SDED). Positions 55-66 (QRKKKKVIKKLT) are enriched in basic residues. Residues 59–84 (KKVIKKLTRKEQSLKHSVKEYRIKLA) adopt a coiled-coil conformation. The segment covering 119–153 (QKTMSDAVKEKMTARDRKEARERFDGKNFDSDKFA) has biased composition (basic and acidic residues). Residues 167 to 190 (GEEEDEQMNIGDDEIDAGNYSDED) are compositionally biased toward acidic residues.

The protein belongs to the RRP15 family.

This is RRP15-like protein from Caenorhabditis briggsae.